A 500-amino-acid chain; its full sequence is Protein SLENDER RICE1-LIKE 2 (500 aa).

One can recognise a GRAS domain in the interval 68-454; that stretch reads KELEKMALRS…QRLYSASAWR (387 aa). A leucine repeat I (LRI) region spans residues 75-135; that stretch reads LRSVNLMVTC…DALAERLFPA (61 aa). Residues 154–219 are VHIID; the sequence is FRGFYEAGPY…GGPPFLRITG (66 aa). The VHIID motif lies at 185 to 189; it reads VHVID. A leucine repeat II (LRII) region spans residues 233-265; it reads DVGLRLAEFARSCSVPFAFRGIAADQLDGLRPW. Residues 275–376 form a PFYRE region; it reads VAINSVLQLH…EAYLQGEIAD (102 aa). The LXXLL motif motif lies at 283 to 287; that stretch reads LHRLL. The interval 379 to 454 is SAW; that stretch reads SREGSSRVER…QRLYSASAWR (76 aa). Residues 466–500 form a disordered region; it reads SGAADAMEESQNSNTNGGGGGSSGGGHGALNQIMQ. Residues 481 to 493 are compositionally biased toward gly residues; it reads NGGGGGSSGGGHG.

Belongs to the GRAS family. In terms of tissue distribution, expressed at low levels in leaf blades, leaf sheaths, rachis and flowers. Expressed in the embryo of immature seeds.

The protein localises to the nucleus. Its function is as follows. Probable transcriptional regulator that acts as a repressor of the gibberellin (GA) signaling pathway. Its repressive activity is weaker than that of SLR1. Its overexpression prevents the GA signaling pathway and induces a dwarf phenotype in Arabidopsis thaliana plants. The polypeptide is Protein SLENDER RICE1-LIKE 2 (Oryza sativa subsp. japonica (Rice)).